A 143-amino-acid chain; its full sequence is 6,7-dimethyl-8-ribityllumazine synthase (143 aa).

5-amino-6-(D-ribitylamino)uracil-binding positions include Trp10, 44–46 (SFE), and 68–70 (CVI). Position 73–74 (73–74 (DT)) interacts with (2S)-2-hydroxy-3-oxobutyl phosphate. His76 (proton donor) is an active-site residue. Residue Tyr101 participates in 5-amino-6-(D-ribitylamino)uracil binding. A (2S)-2-hydroxy-3-oxobutyl phosphate-binding site is contributed by Arg115.

Belongs to the DMRL synthase family.

The catalysed reaction is (2S)-2-hydroxy-3-oxobutyl phosphate + 5-amino-6-(D-ribitylamino)uracil = 6,7-dimethyl-8-(1-D-ribityl)lumazine + phosphate + 2 H2O + H(+). The protein operates within cofactor biosynthesis; riboflavin biosynthesis; riboflavin from 2-hydroxy-3-oxobutyl phosphate and 5-amino-6-(D-ribitylamino)uracil: step 1/2. Functionally, catalyzes the formation of 6,7-dimethyl-8-ribityllumazine by condensation of 5-amino-6-(D-ribitylamino)uracil with 3,4-dihydroxy-2-butanone 4-phosphate. This is the penultimate step in the biosynthesis of riboflavin. In Bacteroides fragilis (strain YCH46), this protein is 6,7-dimethyl-8-ribityllumazine synthase.